The following is an 852-amino-acid chain: DNA mismatch repair protein MutS (852 aa).

615-622 is an ATP binding site; it reads GPNMAGKS.

Belongs to the DNA mismatch repair MutS family.

This protein is involved in the repair of mismatches in DNA. It is possible that it carries out the mismatch recognition step. This protein has a weak ATPase activity. In Thermodesulfovibrio yellowstonii (strain ATCC 51303 / DSM 11347 / YP87), this protein is DNA mismatch repair protein MutS.